We begin with the raw amino-acid sequence, 182 residues long: Ribosome hibernation promotion factor (182 aa).

It belongs to the HPF/YfiA ribosome-associated protein family. Long HPF subfamily. In terms of assembly, interacts with 100S ribosomes.

The protein resides in the cytoplasm. Its function is as follows. Required for dimerization of active 70S ribosomes into 100S ribosomes in stationary phase; 100S ribosomes are translationally inactive and sometimes present during exponential growth. The protein is Ribosome hibernation promotion factor of Streptococcus pyogenes serotype M6 (strain ATCC BAA-946 / MGAS10394).